A 393-amino-acid polypeptide reads, in one-letter code: Probable acetyl-CoA acetyltransferase (393 aa).

Residue Cys88 is the Acyl-thioester intermediate of the active site. Catalysis depends on proton acceptor residues His348 and Cys378.

It belongs to the thiolase-like superfamily. Thiolase family.

It localises to the cytoplasm. The enzyme catalyses 2 acetyl-CoA = acetoacetyl-CoA + CoA. The chain is Probable acetyl-CoA acetyltransferase (yqeF) from Escherichia coli (strain K12).